Reading from the N-terminus, the 191-residue chain is 3-isopropylmalate dehydratase small subunit (191 aa).

This sequence belongs to the LeuD family. LeuD type 1 subfamily. As to quaternary structure, heterodimer of LeuC and LeuD.

It catalyses the reaction (2R,3S)-3-isopropylmalate = (2S)-2-isopropylmalate. It participates in amino-acid biosynthesis; L-leucine biosynthesis; L-leucine from 3-methyl-2-oxobutanoate: step 2/4. Its function is as follows. Catalyzes the isomerization between 2-isopropylmalate and 3-isopropylmalate, via the formation of 2-isopropylmaleate. In Lactococcus lactis subsp. cremoris (strain MG1363), this protein is 3-isopropylmalate dehydratase small subunit.